The following is a 177-amino-acid chain: Apoptosis regulatory protein Siva (177 aa).

Tyr-34 carries the post-translational modification Phosphotyrosine; by ABL2. An interaction with BCL2L1 isoform Bcl-x(L) and inhibition of BCL2L1 anti-apoptotic activity region spans residues 36-55; sequence REVFERTKQLLFQGAQAYRD.

As to quaternary structure, binds through its N-terminal region to the C-terminus of CD27 and to PXMP2/PMP22. Binds to the C-terminus of TNFRSF18/GITR. Binds to BCL2L1/BCLX isoform Bcl-x(L) but not to BAX. It depends on Zn(2+) as a cofactor. In terms of tissue distribution, in post-ischemic kidney, found in cells lining the S3 segment of proximal tubules at 12 hours and 1 day post-ischemia. At five and seven days post-ischemia, found in epithelial cells of papillary proliferations in regenerating tubules.

It is found in the cytoplasm. The protein resides in the nucleus. Its function is as follows. Induces CD27-mediated apoptosis. Inhibits BCL2L1 isoform Bcl-x(L) anti-apoptotic activity. Inhibits activation of NF-kappa-B and promotes T-cell receptor-mediated apoptosis. The protein is Apoptosis regulatory protein Siva (Siva1) of Rattus norvegicus (Rat).